Consider the following 483-residue polypeptide: Regulatory protein ViaA (483 aa).

The protein belongs to the ViaA family. In terms of assembly, homodimer. Interacts with RavA.

It localises to the cytoplasm. Its function is as follows. Component of the RavA-ViaA chaperone complex, which may act on the membrane to optimize the function of some of the respiratory chains. ViaA stimulates the ATPase activity of RavA. The sequence is that of Regulatory protein ViaA from Salmonella dublin (strain CT_02021853).